An 848-amino-acid polypeptide reads, in one-letter code: Adenylate cyclase (848 aa).

The interval 1 to 535 (MYLYIETLKQ…DVSHHFPLRL (535 aa)) is catalytic. The segment at 541 to 848 (KALYSPCEIR…DTPLLQQYFS (308 aa)) is regulatory. His609 is modified (phosphohistidine; by CRR).

It belongs to the adenylyl cyclase class-1 family.

The protein resides in the cytoplasm. The enzyme catalyses ATP = 3',5'-cyclic AMP + diphosphate. With respect to regulation, the regulatory domain is involved in the regulation of cyclase activity by the carbon source. Activated by the PTS system, glucose-specific IIA component (CRR). Its function is as follows. Catalyzes the formation of the second messenger cAMP from ATP. Its transcript is probably degraded by endoribonuclease LS (rnlA), decreasing cAMP levels and the negative regulator Crp-cAMP, which then induces its own transcription again. This is Adenylate cyclase (cyaA) from Escherichia coli (strain K12).